The chain runs to 350 residues: Nicotinate-nucleotide--dimethylbenzimidazole phosphoribosyltransferase (350 aa).

Glu316 acts as the Proton acceptor in catalysis.

Belongs to the CobT family.

It carries out the reaction 5,6-dimethylbenzimidazole + nicotinate beta-D-ribonucleotide = alpha-ribazole 5'-phosphate + nicotinate + H(+). It functions in the pathway nucleoside biosynthesis; alpha-ribazole biosynthesis; alpha-ribazole from 5,6-dimethylbenzimidazole: step 1/2. Functionally, catalyzes the synthesis of alpha-ribazole-5'-phosphate from nicotinate mononucleotide (NAMN) and 5,6-dimethylbenzimidazole (DMB). In Pseudomonas syringae pv. tomato (strain ATCC BAA-871 / DC3000), this protein is Nicotinate-nucleotide--dimethylbenzimidazole phosphoribosyltransferase.